The primary structure comprises 859 residues: Active breakpoint cluster region-related protein (859 aa).

The interval 31–84 is disordered; the sequence is AEGHEEQKGPPEGSETMPYIDESPTMSPQLSARSQGGGESISPTPPEGLAPGVE. Residues 54–64 show a composition bias toward polar residues; it reads PTMSPQLSARS. Ser57 carries the post-translational modification Phosphoserine. In terms of domain architecture, DH spans 91 to 284; it reads MRKLVLSGFL…QNFLSSINED (194 aa). One can recognise a PH domain in the interval 301 to 459; it reads QLVKDGFLVE…WREAIQKLQK (159 aa). Residues 484-613 enclose the C2 domain; that stretch reads TVHNIPVTSN…ESKNWHTDVI (130 aa). In terms of domain architecture, Rho-GAP spans 647–845; it reads VKISVVTKRE…YYLQHPPISF (199 aa).

In terms of assembly, interacts with DLG4. Expressed in brain, including the cortex, hippocampus, cerebellum, and brainstem, as well as the spinal cord (at protein level).

The protein resides in the cell projection. It localises to the dendritic spine. It is found in the axon. The protein localises to the synapse. In terms of biological role, protein with a unique structure having two opposing regulatory activities toward small GTP-binding proteins. The C-terminus is a GTPase-activating protein domain which stimulates GTP hydrolysis by RAC1, RAC2 and CDC42. Accelerates the intrinsic rate of GTP hydrolysis of RAC1 or CDC42, leading to down-regulation of the active GTP-bound form. The central Dbl homology (DH) domain functions as guanine nucleotide exchange factor (GEF) that modulates the GTPases CDC42, RHOA and RAC1. Promotes the conversion of CDC42, RHOA and RAC1 from the GDP-bound to the GTP-bound form. Functions as an important negative regulator of neuronal RAC1 activity. Regulates macrophage functions such as CSF-1 directed motility and phagocytosis through the modulation of RAC1 activity. The polypeptide is Active breakpoint cluster region-related protein (Rattus norvegicus (Rat)).